The following is a 356-amino-acid chain: Histidinol-phosphate aminotransferase (356 aa).

The residue at position 214 (K214) is an N6-(pyridoxal phosphate)lysine.

It belongs to the class-II pyridoxal-phosphate-dependent aminotransferase family. Histidinol-phosphate aminotransferase subfamily. Homodimer. Pyridoxal 5'-phosphate is required as a cofactor.

The catalysed reaction is L-histidinol phosphate + 2-oxoglutarate = 3-(imidazol-4-yl)-2-oxopropyl phosphate + L-glutamate. The protein operates within amino-acid biosynthesis; L-histidine biosynthesis; L-histidine from 5-phospho-alpha-D-ribose 1-diphosphate: step 7/9. The sequence is that of Histidinol-phosphate aminotransferase from Escherichia coli O17:K52:H18 (strain UMN026 / ExPEC).